Here is a 137-residue protein sequence, read N- to C-terminus: Large ribosomal subunit protein uL16 (137 aa).

This sequence belongs to the universal ribosomal protein uL16 family. In terms of assembly, part of the 50S ribosomal subunit.

Binds 23S rRNA and is also seen to make contacts with the A and possibly P site tRNAs. This chain is Large ribosomal subunit protein uL16, found in Leuconostoc mesenteroides subsp. mesenteroides (strain ATCC 8293 / DSM 20343 / BCRC 11652 / CCM 1803 / JCM 6124 / NCDO 523 / NBRC 100496 / NCIMB 8023 / NCTC 12954 / NRRL B-1118 / 37Y).